The following is a 384-amino-acid chain: Putative ankyrin repeat protein L72 (384 aa).

7 ANK repeats span residues Ala88–Asn117, Gly119–Ser146, Asp171–Val200, Asp202–Ser231, Asn233–Asn261, Ile298–Lys324, and Pro325–Val357.

This Acanthamoeba polyphaga (Amoeba) protein is Putative ankyrin repeat protein L72.